The chain runs to 2717 residues: Naringenin synthase (2717 aa).

Positions 13–422 (HHAVESRDKV…VGRKKELIIR (410 aa)) are adenylation (A) domain. The Carrier 1 domain occupies 531–617 (AAVEALVLAE…AVRDYLFNRL (87 aa)). Serine 576 bears the O-(pantetheine 4'-phosphoryl)serine mark. The region spanning 638 to 1066 (AEPIAIISMA…GTNAHIILEQ (429 aa)) is the Ketosynthase family 3 (KS3) domain. Active-site for beta-ketoacyl synthase activity residues include cysteine 810, histidine 945, and histidine 988. The 259-residue stretch at 1204 to 1462 (PIFSRAFKEA…GPSAVLSPHV (259 aa)) folds into the Malonyl-CoA:ACP transacylase (MAT) domain. Positions 1549-1688 (HGVLYRTTSI…GTLKLISLPP (140 aa)) are N-terminal hotdog fold. The PKS/mFAS DH domain maps to 1549-1847 (HGVLYRTTSI…LRAVQPPVVE (299 aa)). A dehydratase (DH) domain region spans residues 1561 to 1842 (TNDIICAGFV…ISEVMLRAVQ (282 aa)). Catalysis depends on histidine 1581, which acts as the Proton acceptor; for dehydratase activity. The C-terminal hotdog fold stretch occupies residues 1703–1847 (NSEVDVSKAY…LRAVQPPVVE (145 aa)). Catalysis depends on aspartate 1764, which acts as the Proton donor; for dehydratase activity. The Ketoreductase (KR) domain maps to 2008–2186 (GTVLITGGTG…AVSLAWGPWA (179 aa)). Residues 2277–2354 (SRSDTLLGLV…ALVQYLLDRI (78 aa)) form the Carrier 2 domain. Serine 2313 carries the O-(pantetheine 4'-phosphoryl)serine modification. Residues 2361–2373 (EIELDQDVAEEET) are compositionally biased toward acidic residues. The segment at 2361-2412 (EIELDQDVAEEETVSGTNGHQNGHQNGTQNGHSNGHANGASTNGDATDGIDP) is disordered. The span at 2375–2396 (SGTNGHQNGHQNGTQNGHSNGH) shows a compositional bias: low complexity. A thioester reductase (TE) domain region spans residues 2497 to 2711 (SLSVYSAVAA…AIAVEIEHWA (215 aa)).

The protein in the N-terminal section; belongs to the NRP synthetase family. Pantetheine 4'-phosphate is required as a cofactor.

Functionally, PKS-NRPS hybrid synthetase that, alone, is sufficient to produce naringenin chalcone, the direct precursor of naringenin, by using p-coumaric acid (p-CA) or p-hydroxybenzoic acid (p-HBA) with the involvement of malonyl-CoA molecules. The adenylation (A) domain activates p-CA or p-HBA as adenylates, which are transferred to the thiol group of the pantetheinyl residue of the T domain, and further transferred to the adjacent PKS portion of fnsA. Besides p-CA and p-HBA, the A domain is also able to activate other substrates such as cinnamic acid and salicyclic acid. Within the PKS portion of fnsA, p-CA and p-HBA act as starter units for respectively three or four malonyl-CoA molecules for elongation by the AT and KS domains of fnsA. Afterwards, naringenin chalcone is cyclized through Claisen condensation and thereby released either spontaneously or catalyzed by the TE domain. Finally, naringenin chalcone is converted to naringenin spontaneously or by a chalcone isomerase. The polypeptide is Naringenin synthase (Pestalotiopsis fici (strain W106-1 / CGMCC3.15140)).